The following is a 599-amino-acid chain: Aspartate--tRNA(Asp/Asn) ligase (599 aa).

E180 lines the L-aspartate pocket. Residues 204–207 (QLLK) form an aspartate region. R226 contributes to the L-aspartate binding site. Residues 226 to 228 (RDE) and Q235 each bind ATP. Position 457 (H457) interacts with L-aspartate. ATP is bound at residue E491. Residue R498 participates in L-aspartate binding. 543 to 546 (GWDR) is an ATP binding site. Positions 565–599 (KAGGGRDPLTGAPAPISDEQRAETGVDYDPDADEN) are disordered. The span at 590-599 (VDYDPDADEN) shows a compositional bias: acidic residues.

Belongs to the class-II aminoacyl-tRNA synthetase family. Type 1 subfamily. In terms of assembly, homodimer.

Its subcellular location is the cytoplasm. It catalyses the reaction tRNA(Asx) + L-aspartate + ATP = L-aspartyl-tRNA(Asx) + AMP + diphosphate. In terms of biological role, aspartyl-tRNA synthetase with relaxed tRNA specificity since it is able to aspartylate not only its cognate tRNA(Asp) but also tRNA(Asn). Reaction proceeds in two steps: L-aspartate is first activated by ATP to form Asp-AMP and then transferred to the acceptor end of tRNA(Asp/Asn). In Bifidobacterium longum (strain NCC 2705), this protein is Aspartate--tRNA(Asp/Asn) ligase.